Consider the following 415-residue polypeptide: Serine--tRNA ligase (415 aa).

L-serine is bound at residue Thr-231–Glu-233. ATP is bound at residue Arg-262–Glu-264. L-serine is bound at residue Glu-285. Glu-349–Ser-352 contacts ATP. Ser-383 serves as a coordination point for L-serine.

Belongs to the class-II aminoacyl-tRNA synthetase family. Type-1 seryl-tRNA synthetase subfamily. As to quaternary structure, homodimer. The tRNA molecule binds across the dimer.

It localises to the cytoplasm. The enzyme catalyses tRNA(Ser) + L-serine + ATP = L-seryl-tRNA(Ser) + AMP + diphosphate + H(+). It carries out the reaction tRNA(Sec) + L-serine + ATP = L-seryl-tRNA(Sec) + AMP + diphosphate + H(+). The protein operates within aminoacyl-tRNA biosynthesis; selenocysteinyl-tRNA(Sec) biosynthesis; L-seryl-tRNA(Sec) from L-serine and tRNA(Sec): step 1/1. Its function is as follows. Catalyzes the attachment of serine to tRNA(Ser). Is also able to aminoacylate tRNA(Sec) with serine, to form the misacylated tRNA L-seryl-tRNA(Sec), which will be further converted into selenocysteinyl-tRNA(Sec). The sequence is that of Serine--tRNA ligase from Helicobacter pylori (strain G27).